The primary structure comprises 224 residues: Transcription cofactor HES-6 (224 aa).

Residues 1–31 are disordered; sequence MAPPAAPGRDRVGREDEDGWETRGDRKARKP. Residues 8–25 show a composition bias toward basic and acidic residues; the sequence is GRDRVGREDEDGWETRGD. The bHLH domain maps to 25 to 77; that stretch reads DRKARKPLVEKKRRARINESLQELRLLLAGAEVQAKLENAEVLELTVRRVQGV. One can recognise an Orange domain in the interval 96 to 129; that stretch reads FAAGYIQCMHEVHTFVSTCQAIDATVAAELLNHL. Residues 147 to 161 show a composition bias toward low complexity; it reads DALAGPPRAPGRSGW. Residues 147-205 form a disordered region; sequence DALAGPPRAPGRSGWPAGGAPGSPIPSPPGPGDDLCSDLEEAPEAELSQAPAEGPDLVP. Over residues 181 to 190 the composition is skewed to acidic residues; sequence LCSDLEEAPE. A WRPW motif motif is present at residues 221-224; sequence WRPW.

In terms of assembly, transcription repression requires formation of a complex with a corepressor protein of the Groucho/TLE family. Interacts with HES1.

It localises to the nucleus. Does not bind DNA itself but suppresses both HES1-mediated N box-dependent transcriptional repression and binding of HES1 to E box sequences. Also suppresses HES1-mediated inhibition of the heterodimer formed by ASCL1/MASH1 and TCF3/E47, allowing ASCL1 and TCF3 to up-regulate transcription in its presence. Promotes cell differentiation. This chain is Transcription cofactor HES-6, found in Homo sapiens (Human).